The sequence spans 264 residues: Methionine aminopeptidase (264 aa).

H79 contributes to the substrate binding site. Positions 97, 108, and 171 each coordinate a divalent metal cation. H178 contributes to the substrate binding site. A divalent metal cation is bound by residues E204 and E235.

Belongs to the peptidase M24A family. Methionine aminopeptidase type 1 subfamily. As to quaternary structure, monomer. Co(2+) is required as a cofactor. The cofactor is Zn(2+). Requires Mn(2+) as cofactor. Fe(2+) serves as cofactor.

It carries out the reaction Release of N-terminal amino acids, preferentially methionine, from peptides and arylamides.. In terms of biological role, removes the N-terminal methionine from nascent proteins. The N-terminal methionine is often cleaved when the second residue in the primary sequence is small and uncharged (Met-Ala-, Cys, Gly, Pro, Ser, Thr, or Val). Requires deformylation of the N(alpha)-formylated initiator methionine before it can be hydrolyzed. This Salmonella typhi protein is Methionine aminopeptidase.